The following is a 182-amino-acid chain: uncharacterized protein (182 aa).

The tract at residues 151 to 172 is disordered; that stretch reads RGPGKPFADEKPCPRERPPADQ. Positions 157–169 are enriched in basic and acidic residues; the sequence is FADEKPCPRERPP.

This is an uncharacterized protein from Mycobacterium tuberculosis (strain CDC 1551 / Oshkosh).